The chain runs to 143 residues: Small ribosomal subunit protein uS9 (143 aa).

Positions Pro-124–Arg-143 are disordered. The span at Ala-134 to Arg-143 shows a compositional bias: basic residues.

The protein belongs to the universal ribosomal protein uS9 family.

In Candida glabrata (strain ATCC 2001 / BCRC 20586 / JCM 3761 / NBRC 0622 / NRRL Y-65 / CBS 138) (Yeast), this protein is Small ribosomal subunit protein uS9 (RPS16).